Consider the following 240-residue polypeptide: Arylmalonate decarboxylase (240 aa).

The enzyme catalyses 2-aryl-2-methylmalonate + H(+) = 2-arylpropionate + CO2. The sequence is that of Arylmalonate decarboxylase from Bordetella bronchiseptica (Alcaligenes bronchisepticus).